A 1248-amino-acid polypeptide reads, in one-letter code: Bifunctional autolysin (1248 aa).

An N-terminal signal peptide occupies residues 1-29 (MAKKFNYKLPSMVALTLVGSAVTAHQVQA). The interval 103–134 (GDTRANQSATTNNTQPVAKSTSTTAPKTNTNV) is disordered. An N-acetylmuramoyl-L-alanine amidase region spans residues 191 to 767 (ASAQPRSVAA…AVAQPKTAVK (577 aa)). GW domains lie at 435-509 (TVAA…YNTA), 511-585 (SPVN…DTAK), 604-678 (TVSS…YNNA), 680-754 (SPVN…VPAA), 776-851 (TTQT…VQNL), 853-928 (KEVK…APTA), and 935-1009 (AAKD…KELI). The interval 768-1248 (AYTVTKPQTT…GKYFDIPQYK (481 aa)) is endo-beta-N-acetylglucosaminidase.

In the N-terminal section; belongs to the N-acetylmuramoyl-L-alanine amidase 2 family. This sequence in the C-terminal section; belongs to the glycosyl hydrolase 73 family. In terms of assembly, oligomer; forms a ring structure at the cell surface which is important for efficient partitioning of daughter cells after cell division. In terms of processing, undergoes proteolytic processing to generate the two extracellular lytic enzymes, probably at the septal region on the cell surface.

The protein localises to the secreted. It carries out the reaction Hydrolyzes the link between N-acetylmuramoyl residues and L-amino acid residues in certain cell-wall glycopeptides.. The catalysed reaction is an N(4)-(oligosaccharide-(1-&gt;3)-[oligosaccharide-(1-&gt;6)]-beta-D-Man-(1-&gt;4)-beta-D-GlcNAc-(1-&gt;4)-alpha-D-GlcNAc)-L-asparaginyl-[protein] + H2O = an oligosaccharide-(1-&gt;3)-[oligosaccharide-(1-&gt;6)]-beta-D-Man-(1-&gt;4)-D-GlcNAc + N(4)-(N-acetyl-beta-D-glucosaminyl)-L-asparaginyl-[protein]. Its function is as follows. Endohydrolysis of the di-N-acetylchitobiosyl unit in high-mannose glycopeptides and glycoproteins containing the -[(Man)5(GlcNAc)2]-Asn structure. One N-acetyl-D-glucosamine residue remains attached to the protein; the rest of the oligosaccharide is released intact. Cleaves the peptidoglycan connecting the daughter cells at the end of the cell division cycle, resulting in the separation of the two newly divided cells. Acts as an autolysin in penicillin-induced lysis. This is Bifunctional autolysin (atl) from Staphylococcus aureus (strain Mu50 / ATCC 700699).